Consider the following 269-residue polypeptide: DNA-binding protein RFXANK (269 aa).

Residues 1–36 (MEPTQVAENLVPNQQPPVPDLEDPEDTRDESPENSD) are disordered. ANK repeat units follow at residues 88–127 (LDSLSIHQLAAQGELSQLKDHLRKGACPACTCLSGNNLIN), 132–161 (RGFTPLIWASAFGEIETVRFLLDWGADPHI), 165–194 (ERESALSLASMGGYTDIVRLLLDRDVDINI), 198–227 (NGGTPLLYAVRGNHVKCVEALLARGADLTT), and 231–260 (SGYTPMDLAVALGYRKVQQVMESHILRLFQ).

In terms of assembly, forms homodimers. The RFX heterotetrameric complex consists of 2 molecules of RFX5 and one each of RFXAP and RFX-B/RFXANK; with each subunit representing a separate complementation group. Interacts (via ankyrin repeats) with RFX5 (via PxLPxI/L motif); the interaction is direct. RFX forms cooperative DNA binding complexes with X2BP and CBF/NF-Y. RFX associates with CIITA to form an active transcriptional complex. Interacts with RAF1. Interacts with RFX7. Phosphorylated by RAF1. In terms of tissue distribution, expressed primarily in thymus, lung and testis.

It localises to the cytoplasm. The protein resides in the nucleus. In terms of biological role, activates transcription from class II MHC promoters. Activation requires the activity of the MHC class II transactivator/CIITA. May regulate other genes in the cell. RFX binds the X1 box of MHC-II promoters. May also potentiate the activation of RAF1. The sequence is that of DNA-binding protein RFXANK (Rfxank) from Mus musculus (Mouse).